Reading from the N-terminus, the 220-residue chain is MASSSATLSLCSTFSAHCNVNSRRSSTILCSLSKPSLNLAKPLTGFLSPSTASTSRTAFTVAPKFAESVVEAEPETTDIEAVVVSDVSEVTEEKAKREEIFAVIMVGGRQYIVFPGRYLYTQRLKDANVDDQIVLNKVLLVGTKTHTYIGKPVVTNATVHAVVESQGLNDKVVVFKYKPKKKYRRNIGHRQPNTRIRITGITGYEEYPASPNVAVGEVNL.

This sequence belongs to the bacterial ribosomal protein bL21 family. Part of the 50S ribosomal subunit.

Its subcellular location is the plastid. It localises to the chloroplast. Functionally, this protein binds to 23S ribosomal RNA in the presence of protein L20. This chain is Large ribosomal subunit protein bL21c (RPL21), found in Arabidopsis thaliana (Mouse-ear cress).